The following is a 386-amino-acid chain: Putative acid--amine ligase YgiC (386 aa).

100 to 102 is an ATP binding site; sequence RLD. The Mg(2+) site is built by D102, E115, and N117. ATP contacts are provided by residues K267, K302, G309, Q336, and 371 to 373; that span reads LIT.

Belongs to the glutathionylspermidine synthase preATP-grasp family.

In terms of biological role, may be a ligase forming an amide bond. Shows ATPase activity. The polypeptide is Putative acid--amine ligase YgiC (ygiC) (Escherichia coli O157:H7).